A 563-amino-acid chain; its full sequence is MSYQALYRVFRPQRFEDVVGQEHITKTLQNALLQKKFSHAYLFSGPRGTGKTSAAKIFAKAVNCEHAPVDEPCNECAACKGITNGSISDVIEIDAASNNGVDEIRDIRDKVKFAPSAVTYKVYIIDEVHMLSIGAFNALLKTLEEPPEHCIFILATTEPHKIPLTIISRCQRFDFKRITSQAIVGRMNKIVDAEQLQVEEGSLEIIASAADGGMRDALSLLDQAISFSGDILKVEDALLITGAVSQLYIGKLAKSLHDKNVSDALETLNELLQQGKDPAKLIEDMIFYFRDMLLYKTAPGLEGVLEKVKVDETFRELSEQIPAQALYEMIDILNKSHQEMKWTNHPRIFFEVAVVKICQTSHQSAADLPEVDMLMKKIQQLEQEVERLKTTGIKAAAESPKKEAPRVPKGGKSNYKAPVGRIHEILKEATRPDLDLLRNSWGKLLAHLKQQNKVSHAALLNDSEPVAAGSAAFVLKFKYEIHCKMVAEDNNGVRTNLEQILESMLGKRMDLIGVPEAQWGKIREEFLEDHQQENEGSNEPAEEDPLIAEAKKLVGADLIEIKD.

45–52 (GPRGTGKT) is a binding site for ATP. Zn(2+) is bound by residues Cys-64, Cys-73, Cys-76, and Cys-79.

Belongs to the DnaX/STICHEL family. As to quaternary structure, component of the DNA clamp loading complex consisting of tau(3):delta(1):delta'(1). The DNA polymerase III holoenzyme complex contains at least 10 different subunits organized into 3 functionally essential subassemblies: the Pol III core, the beta sliding clamp processivity factor and the clamp-loading complex. The Pol III core (subunits alpha, epsilon and theta) contains the polymerase and the 3'-5' exonuclease proofreading activities. The polymerase is tethered to the template via the dimeric beta sliding clamp processivity factor. The DNA clamp-loading complex assembles the beta sliding clamp onto the primed template and plays a central role in the organization and communication at the replication fork. Forms a complex with replicative DNA helicase DnaB (shown with G.stearothermophilus DnaB) tau(3):DnaB(6); a single ATP hydrolysis even is sufficient for complex formation. Colocalizes with DNA helicases PriA, RecQ and RecS.

It localises to the cytoplasm. The protein resides in the nucleoid. The catalysed reaction is DNA(n) + a 2'-deoxyribonucleoside 5'-triphosphate = DNA(n+1) + diphosphate. Its function is as follows. Part of the beta sliding clamp loading complex, which hydrolyzes ATP to load the beta clamp onto primed DNA to form the DNA replication pre-initiation complex. DNA polymerase III is a complex, multichain enzyme responsible for most of the replicative DNA synthesis in bacteria. The chain is DNA polymerase III subunit tau from Bacillus subtilis (strain 168).